Consider the following 720-residue polypeptide: Receptor-like protein CLAVATA2 (720 aa).

Positions 1 to 25 are cleaved as a signal peptide; that stretch reads MIKIADFTLFFFIFVFSPSLPLAQS. The interval 26–92 is N-cap; the sequence is QLPDLDPQDK…LNLSSQIHPS (67 aa). Residues 26-686 lie on the Extracellular side of the membrane; the sequence is QLPDLDPQDK…QNELVEGPIS (661 aa). N-linked (GlcNAc...) asparagine glycosylation is found at Asn-49, Asn-62, Asn-84, Asn-108, Asn-127, and Asn-168. Cysteines 60 and 68 form a disulfide. 21 LRR repeats span residues 96–122, 124–144, 146–168, 170–194, 195–217, 219–238, 239–263, 264–287, 288–311, 314–338, 339–362, 364–386, 388–410, 411–436, 438–458, 459–482, 484–506, 547–571, 573–594, 595–617, and 619–641; these read LSSL…SLRN, RTLN…FVSL, ELRE…WFGN, SMNL…LLYL, KSLK…FQQP, VVLN…FYAS, RPSL…LGSL, KELS…LMFS, EKLV…ISET, KLGL…ITEL, KSLQ…IGNL, YLQV…IVGC, QLLA…LDAL, DSLK…GLKS, EIVD…ITKW, SNLK…LFKF, KIQM…NLNS, LLSM…LFRQ, NIEY…LEKL, PRLK…NISA, and PGLT…KEGL. The N-linked (GlcNAc...) asparagine glycan is linked to Asn-206. Asn-270 carries an N-linked (GlcNAc...) asparagine glycan. The N-linked (GlcNAc...) asparagine glycan is linked to Asn-361. N-linked (GlcNAc...) asparagine glycosylation occurs at Asn-398. Asn-446 carries N-linked (GlcNAc...) asparagine glycosylation. Asn-505 is a glycosylation site (N-linked (GlcNAc...) asparagine). Asn-578, Asn-614, and Asn-625 each carry an N-linked (GlcNAc...) asparagine glycan. A C-cap/acidic domain region spans residues 649–682; the sequence is AGNPELCVETPGSKCDPANIDASQEEIYQNELVE. A helical membrane pass occupies residues 687–707; sequence IWIFCLSAFISFDFGVLGIFC. Residues 708-720 are Cytoplasmic-facing; it reads SARARSYILQTKA.

The protein belongs to the RLP family. Parts of a tetrameric complex made of two CLV2/CRN heterodimers that can interact with CLV3 and CLE peptides. CLV2/CRN heterodimer interacts with CLV1 homodimers. Interacts with CRN; this dimer can interact with BAM3. Interacts with CLE14. As to expression, mostly expressed in apices (e.g. shoot apical meristem and flower buds), and, to a lower extent, in flowers, leaves, seedlings and siliques. Also expressed in the inner tissues of the proximal root meristem. Expressed throughout the vascular cylinder of root tips.

The protein localises to the cell membrane. Its subcellular location is the endoplasmic reticulum membrane. Its function is as follows. Involved in the perception of CLV3 and CLV3-like (CLE) peptides, that act as extracellular signals regulating meristems maintenance. Required for the sensing of the root CLE peptides (e.g. CLE8, CLE9/CLE10, CLE11, CLE13, CLE14, CLE16, CLE17, CLE18, CLE20, CLE21, CLE25, CLE26, CLE40, CLE41/CLE44 and CLE45), which also involves CRN and leads to root growth regulation, mostly in the phloem and protophloem. Involved in controlling the stem cell population size in shoot and root apical meristems, and during organ development. Promotes the formation of CLV1 multimers. In complex with CRN, perceives secreted CLV3-like effector proteins from plant-parasitic cyst nematodes as ligand mimics of the plant CLE signaling pathway. This recognition is required for proper feeding structure (syncytium) development and ultimately successful nematode infection. CLE14 perception by CLV2/CRN complex triggers root meristem differentiation. The chain is Receptor-like protein CLAVATA2 from Arabidopsis thaliana (Mouse-ear cress).